Consider the following 260-residue polypeptide: MLKFYDKTVTSRLLIGTALYPSPAIMQDAIRASGAEIVTVSLRREAAGGKTGDAFWKLINELNVTVLPNTAGCRSVREAVTTAKLARELFGTSWIKLEVIGDNDTLQPDVIGLVEAATILIKDGFEVFPYCTEDLTVATRLVDAGCRVVMPWAAPIGSAKGIINRDALKLLRDRLPDITLVVDAGLGAPSHAAGALELGYDAVLLNTAIAKAADPVAMARAFRLGVEAGRTAYEAGLMDARDFASPSTPVVGTPFWHAVS.

Catalysis depends on lysine 96, which acts as the Schiff-base intermediate with DXP. Residues glycine 157, alanine 184 to glycine 185, and asparagine 206 to threonine 207 each bind 1-deoxy-D-xylulose 5-phosphate.

It belongs to the ThiG family. Homotetramer. Forms heterodimers with either ThiH or ThiS.

The protein resides in the cytoplasm. The catalysed reaction is [ThiS sulfur-carrier protein]-C-terminal-Gly-aminoethanethioate + 2-iminoacetate + 1-deoxy-D-xylulose 5-phosphate = [ThiS sulfur-carrier protein]-C-terminal Gly-Gly + 2-[(2R,5Z)-2-carboxy-4-methylthiazol-5(2H)-ylidene]ethyl phosphate + 2 H2O + H(+). It participates in cofactor biosynthesis; thiamine diphosphate biosynthesis. Functionally, catalyzes the rearrangement of 1-deoxy-D-xylulose 5-phosphate (DXP) to produce the thiazole phosphate moiety of thiamine. Sulfur is provided by the thiocarboxylate moiety of the carrier protein ThiS. In vitro, sulfur can be provided by H(2)S. The polypeptide is Thiazole synthase (Bradyrhizobium sp. (strain ORS 278)).